The chain runs to 217 residues: ATP-dependent Clp protease proteolytic subunit (217 aa).

The active-site Nucleophile is the Ser119. The active site involves His144.

The protein belongs to the peptidase S14 family. In terms of assembly, fourteen ClpP subunits assemble into 2 heptameric rings which stack back to back to give a disk-like structure with a central cavity, resembling the structure of eukaryotic proteasomes.

It localises to the cytoplasm. It catalyses the reaction Hydrolysis of proteins to small peptides in the presence of ATP and magnesium. alpha-casein is the usual test substrate. In the absence of ATP, only oligopeptides shorter than five residues are hydrolyzed (such as succinyl-Leu-Tyr-|-NHMec, and Leu-Tyr-Leu-|-Tyr-Trp, in which cleavage of the -Tyr-|-Leu- and -Tyr-|-Trp bonds also occurs).. Functionally, cleaves peptides in various proteins in a process that requires ATP hydrolysis. Has a chymotrypsin-like activity. Plays a major role in the degradation of misfolded proteins. In Bordetella bronchiseptica (strain ATCC BAA-588 / NCTC 13252 / RB50) (Alcaligenes bronchisepticus), this protein is ATP-dependent Clp protease proteolytic subunit.